The sequence spans 127 residues: Interacting with cytoskeleton protein 1 (127 aa).

Its subcellular location is the vacuole membrane. Its function is as follows. Required for viability of cells lacking mtDNA. This is Interacting with cytoskeleton protein 1 (ICY1) from Saccharomyces cerevisiae (strain ATCC 204508 / S288c) (Baker's yeast).